A 395-amino-acid chain; its full sequence is Elongation factor Tu (395 aa).

Residues 10-204 (KTHANIGTIG…AVDEYIPTPE (195 aa)) form the tr-type G domain. The G1 stretch occupies residues 19–26 (GHVDHGKT). Position 19–26 (19–26 (GHVDHGKT)) interacts with GTP. Residue T26 participates in Mg(2+) binding. Residues 60–64 (GITIN) are G2. A G3 region spans residues 81–84 (DCPG). Residues 81 to 85 (DCPGH) and 136 to 139 (NKVD) contribute to the GTP site. The segment at 136-139 (NKVD) is G4. Positions 174-176 (SAL) are G5.

The protein belongs to the TRAFAC class translation factor GTPase superfamily. Classic translation factor GTPase family. EF-Tu/EF-1A subfamily. Monomer.

It is found in the cytoplasm. It carries out the reaction GTP + H2O = GDP + phosphate + H(+). Functionally, GTP hydrolase that promotes the GTP-dependent binding of aminoacyl-tRNA to the A-site of ribosomes during protein biosynthesis. The protein is Elongation factor Tu of Macrococcus caseolyticus (strain JCSC5402) (Macrococcoides caseolyticum).